The sequence spans 478 residues: MVDSSKAPLPFRDSALSFKREYAESLDAQDPLREFRNQFIIPSKADLKRKSLAVAEGESPSSDCIYLCGNSLGLQPKNARMYIDRFLQTWATKAVLGHFTKLEDSPFPPYMDYDDVTSKLMAQVVGALPSEVAVMSTLTGNLHLLMASFYRPTKEKYKIILEGKAFPSDHYAVESQIRHHGFDPKDAMVLIEPKDLKEPVLPTERILKTIDEHASSTALILLPGIQYYSGQYLDIPTITAHAHSKGLLIGWDCAHAAGNVELKLHDWDVDFAAWCTYKYVNSGPGSMGALFVHEKHGQVNLENKEDPYRHRLTGWWGGDKSLRFLMDNNFVPRPGAAGFQLSNPSVLDMTAVLSSLDIFDKATMPALRKKSLELTAYLEHLLLNSPEGVRPSDDPFSIITPSDPEARGAQLSVLLKPGLLDSVFSHLVDNGVILDERKPDVIRVAPAPLYNTFTDVWDFVQIFFDACRKAAQEKDTTS.

Residues Leu138, Thr139, 166–169 (FPSD), Asp252, His255, and Tyr277 each bind pyridoxal 5'-phosphate. Residue Lys278 is modified to N6-(pyridoxal phosphate)lysine. The pyridoxal 5'-phosphate site is built by Trp315 and Asn343.

Belongs to the kynureninase family. As to quaternary structure, homodimer. Pyridoxal 5'-phosphate is required as a cofactor.

The protein resides in the cytoplasm. The enzyme catalyses L-kynurenine + H2O = anthranilate + L-alanine + H(+). It carries out the reaction 3-hydroxy-L-kynurenine + H2O = 3-hydroxyanthranilate + L-alanine + H(+). It functions in the pathway amino-acid degradation; L-kynurenine degradation; L-alanine and anthranilate from L-kynurenine: step 1/1. The protein operates within cofactor biosynthesis; NAD(+) biosynthesis; quinolinate from L-kynurenine: step 2/3. Catalyzes the cleavage of L-kynurenine (L-Kyn) and L-3-hydroxykynurenine (L-3OHKyn) into anthranilic acid (AA) and 3-hydroxyanthranilic acid (3-OHAA), respectively. This is Kynureninase from Coccidioides immitis (strain RS) (Valley fever fungus).